Reading from the N-terminus, the 363-residue chain is Cytoplasmic envelopment protein 2 (363 aa).

Belongs to the herpesviridae cytoplasmic envelopment protein 2 family. Interacts with cytoplasmic envelopment protein 3 and with the capsid.

Its subcellular location is the virion tegument. The protein localises to the host cytoplasm. It is found in the host nucleus. Its function is as follows. Plays a critical role in cytoplasmic virus egress. Participates in the final step of tegumentation and envelope acquisition within the host cytoplasm by directly interacting with the capsid. Upon virion binding to target cell, a signaling cascade is triggered to disrupt the interaction with the capsid, thereby preparing capsid uncoating. The sequence is that of Cytoplasmic envelopment protein 2 (44) from Varicella-zoster virus (strain Dumas) (HHV-3).